The primary structure comprises 346 residues: N-acetyl-gamma-glutamyl-phosphate reductase (346 aa).

The active site involves Cys149.

The protein belongs to the NAGSA dehydrogenase family. Type 1 subfamily.

The protein resides in the cytoplasm. The catalysed reaction is N-acetyl-L-glutamate 5-semialdehyde + phosphate + NADP(+) = N-acetyl-L-glutamyl 5-phosphate + NADPH + H(+). Its pathway is amino-acid biosynthesis; L-arginine biosynthesis; N(2)-acetyl-L-ornithine from L-glutamate: step 3/4. Catalyzes the NADPH-dependent reduction of N-acetyl-5-glutamyl phosphate to yield N-acetyl-L-glutamate 5-semialdehyde. This is N-acetyl-gamma-glutamyl-phosphate reductase from Geobacter sp. (strain M21).